The following is a 40-amino-acid chain: Photosystem II reaction center protein J (40 aa).

Residues 8 to 28 form a helical membrane-spanning segment; it reads IPLWIIGTVAGIPVIGLIGIF.

It belongs to the PsbJ family. As to quaternary structure, PSII is composed of 1 copy each of membrane proteins PsbA, PsbB, PsbC, PsbD, PsbE, PsbF, PsbH, PsbI, PsbJ, PsbK, PsbL, PsbM, PsbT, PsbX, PsbY, PsbZ, Psb30/Ycf12, at least 3 peripheral proteins of the oxygen-evolving complex and a large number of cofactors. It forms dimeric complexes.

It localises to the plastid. The protein resides in the chloroplast thylakoid membrane. In terms of biological role, one of the components of the core complex of photosystem II (PSII). PSII is a light-driven water:plastoquinone oxidoreductase that uses light energy to abstract electrons from H(2)O, generating O(2) and a proton gradient subsequently used for ATP formation. It consists of a core antenna complex that captures photons, and an electron transfer chain that converts photonic excitation into a charge separation. This is Photosystem II reaction center protein J from Pelargonium hortorum (Common geranium).